A 178-amino-acid polypeptide reads, in one-letter code: Photosystem II extrinsic protein V (178 aa).

Positions 1-38 (MFSKFFSLQKAFAAARRRLLILILVLGMAGYAWGPALA) are cleaved as a signal peptide. The heme c site is built by Cys71, Cys74, His75, and His126.

It belongs to the cytochrome c family. PsbV subfamily. As to quaternary structure, PSII is composed of 1 copy each of membrane proteins PsbA, PsbB, PsbC, PsbD, PsbE, PsbF, PsbH, PsbI, PsbJ, PsbK, PsbL, PsbM, PsbT, PsbX, PsbY, PsbZ, Psb30/Ycf12, peripheral proteins PsbO, CyanoQ (PsbQ), PsbU, PsbV and a large number of cofactors. It forms dimeric complexes. Requires heme c as cofactor.

Its subcellular location is the cellular thylakoid membrane. One of the extrinsic, lumenal subunits of photosystem II (PSII). PSII is a light-driven water plastoquinone oxidoreductase, using light energy to abstract electrons from H(2)O, generating a proton gradient subsequently used for ATP formation. The extrinsic proteins stabilize the structure of photosystem II oxygen-evolving complex (OEC), the ion environment of oxygen evolution and protect the OEC against heat-induced inactivation. Low-potential cytochrome c that plays a role in the OEC of PSII. This chain is Photosystem II extrinsic protein V, found in Synechococcus sp. (strain JA-3-3Ab) (Cyanobacteria bacterium Yellowstone A-Prime).